The following is a 115-amino-acid chain: Small ribosomal subunit protein bS6 (115 aa).

Belongs to the bacterial ribosomal protein bS6 family.

In terms of biological role, binds together with bS18 to 16S ribosomal RNA. This Syntrophotalea carbinolica (strain DSM 2380 / NBRC 103641 / GraBd1) (Pelobacter carbinolicus) protein is Small ribosomal subunit protein bS6.